The chain runs to 556 residues: Dihydroxy-acid dehydratase (556 aa).

C47 lines the [2Fe-2S] cluster pocket. Mg(2+) is bound at residue D79. C120 lines the [2Fe-2S] cluster pocket. The Mg(2+) site is built by D121 and K122. An N6-carboxylysine modification is found at K122. C192 provides a ligand contact to [2Fe-2S] cluster. A Mg(2+)-binding site is contributed by E444. S470 serves as the catalytic Proton acceptor.

It belongs to the IlvD/Edd family. In terms of assembly, homodimer. [2Fe-2S] cluster serves as cofactor. Requires Mg(2+) as cofactor.

It catalyses the reaction (2R)-2,3-dihydroxy-3-methylbutanoate = 3-methyl-2-oxobutanoate + H2O. It carries out the reaction (2R,3R)-2,3-dihydroxy-3-methylpentanoate = (S)-3-methyl-2-oxopentanoate + H2O. The protein operates within amino-acid biosynthesis; L-isoleucine biosynthesis; L-isoleucine from 2-oxobutanoate: step 3/4. Its pathway is amino-acid biosynthesis; L-valine biosynthesis; L-valine from pyruvate: step 3/4. In terms of biological role, functions in the biosynthesis of branched-chain amino acids. Catalyzes the dehydration of (2R,3R)-2,3-dihydroxy-3-methylpentanoate (2,3-dihydroxy-3-methylvalerate) into 2-oxo-3-methylpentanoate (2-oxo-3-methylvalerate) and of (2R)-2,3-dihydroxy-3-methylbutanoate (2,3-dihydroxyisovalerate) into 2-oxo-3-methylbutanoate (2-oxoisovalerate), the penultimate precursor to L-isoleucine and L-valine, respectively. The protein is Dihydroxy-acid dehydratase of Prochlorococcus marinus (strain MIT 9313).